We begin with the raw amino-acid sequence, 458 residues long: Elongation factor 1-alpha (458 aa).

At glycine 2 the chain carries N,N,N-trimethylglycine. At lysine 3 the chain carries N6,N6-dimethyllysine; alternate. Lysine 3 bears the N6-methyllysine; alternate mark. The tr-type G domain occupies lysine 5–serine 240. The tract at residues glycine 14–serine 21 is G1. Glycine 14 to serine 21 is a binding site for GTP. Position 30 is an N6-methyllysine (lysine 30). The tract at residues glycine 70–aspartate 74 is G2. Lysine 79 is modified (N6,N6,N6-trimethyllysine). Positions aspartate 91–glycine 94 are G3. Residues aspartate 91–histidine 95 and asparagine 153–aspartate 156 contribute to the GTP site. A G4 region spans residues asparagine 153–aspartate 156. Residues serine 192–tryptophan 194 are G5. An N6,N6-dimethyllysine; alternate modification is found at lysine 316. At lysine 316 the chain carries N6-methyllysine; alternate. An N6-methyllysine modification is found at lysine 390.

This sequence belongs to the TRAFAC class translation factor GTPase superfamily. Classic translation factor GTPase family. EF-Tu/EF-1A subfamily.

It is found in the cytoplasm. This protein promotes the GTP-dependent binding of aminoacyl-tRNA to the A-site of ribosomes during protein biosynthesis. The chain is Elongation factor 1-alpha (TEF-2) from Mucor circinelloides f. lusitanicus (Mucor racemosus var. lusitanicus).